The following is a 590-amino-acid chain: RNA-binding protein 47 (590 aa).

Polar residues predominate over residues 1 to 21 (MTAEDSTTAMNSDPTVGSSTK). The interval 1–26 (MTAEDSTTAMNSDPTVGSSTKVPEGV) is disordered. RRM domains follow at residues 71-149 (CEVF…CSVD), 151-233 (CRLF…WAEP), and 246-318 (KILY…LAKP). R396 and R407 each carry asymmetric dimethylarginine; alternate. Residues R396 and R407 each carry the omega-N-methylarginine; alternate modification.

This sequence belongs to the RRM RBM47 family. In terms of assembly, homodimer. Interacts with A1CF. Interacts with APOBEC1; form an mRNA editing complex. Interacts with RBPMS.

Its subcellular location is the nucleus. It is found in the cytoplasm. In terms of biological role, single-stranded RNA-binding protein that functions in a variety of RNA processes, including alternative splicing, RNA stabilization, and RNA editing. Functions as an enzyme-substrate adapter for the cytidine deaminase APOBEC1. With APOBEC1 forms an mRNA editing complex involved into cytidine to uridine editing of a variety of mRNA molecules. Through the binding of their 3'UTR, also stabilizes a variety of mRNAs and regulates the expression of genes such as the interferon alpha/beta receptor and interleukin-10. Also involved in the alternative splicing of several genes including TJP1. Binds the pre-mRNA (U)GCAUG consensus sequences in downstream intronic regions of alternative exons regulating their exclusion and inclusion into mRNAs. Independently of its RNA-binding activity, could negatively regulate MAVS by promoting its lysosomal degradation. This Rattus norvegicus (Rat) protein is RNA-binding protein 47.